The chain runs to 89 residues: Small ribosomal subunit protein uS15 (89 aa).

Belongs to the universal ribosomal protein uS15 family. In terms of assembly, part of the 30S ribosomal subunit. Forms a bridge to the 50S subunit in the 70S ribosome, contacting the 23S rRNA.

One of the primary rRNA binding proteins, it binds directly to 16S rRNA where it helps nucleate assembly of the platform of the 30S subunit by binding and bridging several RNA helices of the 16S rRNA. Its function is as follows. Forms an intersubunit bridge (bridge B4) with the 23S rRNA of the 50S subunit in the ribosome. In Enterobacter sp. (strain 638), this protein is Small ribosomal subunit protein uS15.